A 254-amino-acid polypeptide reads, in one-letter code: Probable membrane transporter protein YjnA (254 aa).

6 helical membrane passes run 5–25 (IILM…GGAA), 75–95 (AIGS…FPAF), 105–125 (HALG…LFLD), 143–163 (ALTI…SIGS), 187–207 (IAHA…FGSV), and 209–229 (YMLA…GSHL).

It belongs to the 4-toluene sulfonate uptake permease (TSUP) (TC 2.A.102) family.

The protein localises to the cell membrane. The polypeptide is Probable membrane transporter protein YjnA (yjnA) (Bacillus subtilis (strain 168)).